A 434-amino-acid chain; its full sequence is Putative peptidase B (434 aa).

Positions 198 and 203 each coordinate Mn(2+). Lys210 is an active-site residue. Residues Asp221, Asp280, and Glu282 each coordinate Mn(2+). Arg284 is an active-site residue.

It belongs to the peptidase M17 family. In terms of assembly, homohexamer. Mn(2+) is required as a cofactor.

The protein localises to the cytoplasm. The enzyme catalyses Release of an N-terminal amino acid, Xaa, from a peptide or arylamide. Xaa is preferably Glu or Asp but may be other amino acids, including Leu, Met, His, Cys and Gln.. Its function is as follows. Probably plays an important role in intracellular peptide degradation. The chain is Putative peptidase B from Haemophilus influenzae (strain ATCC 51907 / DSM 11121 / KW20 / Rd).